A 543-amino-acid polypeptide reads, in one-letter code: Organic anion transporter 3 (543 aa).

At 1-21 (MTFAELVDRVGSKGPFQLLHT) the chain is on the cytoplasmic side. A helical transmembrane segment spans residues 22–42 (VLLGLPILGMANHNLLQIFTA). Topologically, residues 43-124 (PTPAHHCRPP…LVCSSSKLKE (82 aa)) are extracellular. N-linked (GlcNAc...) asparagine glycosylation occurs at Asn-81. Residues 125–145 (MAQSVFMAGILVGGLVLGALS) form a helical membrane-spanning segment. The Cytoplasmic segment spans residues 146-151 (DRFGRK). A helical transmembrane segment spans residues 152 to 172 (PILIFSYLLLGASGSGAAFSP). At 173 to 181 (TFSIYAVFR) the chain is on the extracellular side. The chain crosses the membrane as a helical span at residues 182-202 (FLCGFSISGISLSTAILNVEW). Residues 203–212 (VSTRFRAIKS) are Cytoplasmic-facing. The chain crosses the membrane as a helical span at residues 213 to 233 (IAVGFFYTFGQFILPGLAYAI). Residues 234–237 (PQWR) are Extracellular-facing. Residues 238–258 (WLQLTVSVPFLTFFLLSWWLP) form a helical membrane-spanning segment. Residues 259-328 (ESIRWMVLSG…FRTPVLRRVT (70 aa)) are Cytoplasmic-facing. Residues 329–349 (LCLSLAWFATGFAYYSLAMGV) form a helical membrane-spanning segment. The Extracellular portion of the chain corresponds to 350–355 (EEFGVN). A helical transmembrane segment spans residues 356-376 (LYVLQLIFGGVDVPAKFITML). Topologically, residues 377–388 (SISYLGRHITEG) are cytoplasmic. A helical membrane pass occupies residues 389–409 (IVLLLAGGCILALIFVPLDLM). Residues 410-412 (TLR) are Extracellular-facing. A helical membrane pass occupies residues 413-433 (TVLAVFGKGCLSGSFSCLFLY). Topologically, residues 434 to 472 (TSELYPTVIRQTGMGASNLWARVGSMTAPLVKITGELQP) are cytoplasmic. A helical transmembrane segment spans residues 473–493 (FIPNIIFGTIALLGGSAALFL). Residues 494–543 (PETLNRPLPETIEDIETWSLRAKEPKPEPEAEKSSQRIPLQPCEPGPGPS) are Extracellular-facing. The disordered stretch occupies residues 513-543 (LRAKEPKPEPEAEKSSQRIPLQPCEPGPGPS). A compositionally biased stretch (basic and acidic residues) spans 514 to 528 (RAKEPKPEPEAEKSS).

This sequence belongs to the major facilitator (TC 2.A.1) superfamily. Organic cation transporter (TC 2.A.1.19) family. Expressed in kidney.

The protein resides in the basolateral cell membrane. The catalysed reaction is estrone 3-sulfate(out) + glutarate(in) = estrone 3-sulfate(in) + glutarate(out). It carries out the reaction estrone 3-sulfate(in) + 2-oxoglutarate(out) = estrone 3-sulfate(out) + 2-oxoglutarate(in). It catalyses the reaction glutarate(in) + 2-oxoglutarate(out) = glutarate(out) + 2-oxoglutarate(in). The enzyme catalyses urate(in) + 2-oxoglutarate(out) = urate(out) + 2-oxoglutarate(in). The catalysed reaction is taurocholate(out) + glutarate(in) = taurocholate(in) + glutarate(out). It carries out the reaction dehydroepiandrosterone 3-sulfate(out) + glutarate(in) = dehydroepiandrosterone 3-sulfate(in) + glutarate(out). It catalyses the reaction prostaglandin F2alpha(out) + glutarate(in) = prostaglandin F2alpha(in) + glutarate(out). The enzyme catalyses prostaglandin F2alpha(out) + 2-oxoglutarate(in) = prostaglandin F2alpha(in) + 2-oxoglutarate(out). The catalysed reaction is (R)-carnitine(out) + 2-oxoglutarate(in) = (R)-carnitine(in) + 2-oxoglutarate(out). It carries out the reaction glutarate(in) + (R)-carnitine(out) = glutarate(out) + (R)-carnitine(in). It catalyses the reaction prostaglandin E2(out) + 2-oxoglutarate(in) = prostaglandin E2(in) + 2-oxoglutarate(out). The enzyme catalyses prostaglandin E2(out) + glutarate(in) = prostaglandin E2(in) + glutarate(out). The catalysed reaction is urate(in) + glutarate(out) = urate(out) + glutarate(in). It carries out the reaction taurocholate(out) + 2-oxoglutarate(in) = taurocholate(in) + 2-oxoglutarate(out). It catalyses the reaction dehydroepiandrosterone 3-sulfate(out) + 2-oxoglutarate(in) = dehydroepiandrosterone 3-sulfate(in) + 2-oxoglutarate(out). The enzyme catalyses kynurenate(out) + a dicarboxylate(in) = kynurenate(in) + a dicarboxylate(out). The catalysed reaction is (indol-3-yl)acetate(out) + a dicarboxylate(in) = (indol-3-yl)acetate(in) + a dicarboxylate(out). It carries out the reaction indoxyl sulfate(out) + a dicarboxylate(in) = indoxyl sulfate(in) + a dicarboxylate(out). It catalyses the reaction N-benzoylglycine(out) + a dicarboxylate(in) = N-benzoylglycine(in) + a dicarboxylate(out). The enzyme catalyses 3-carboxy-4-methyl-5-propyl-2-furanpropanoate(out) + a dicarboxylate(in) = 3-carboxy-4-methyl-5-propyl-2-furanpropanoate(in) + a dicarboxylate(out). The catalysed reaction is (6R)-L-erythro-5,6,7,8-tetrahydrobiopterin(out) + a dicarboxylate(in) = (6R)-L-erythro-5,6,7,8-tetrahydrobiopterin(in) + a dicarboxylate(out). It carries out the reaction L-erythro-7,8-dihydrobiopterin(out) + a dicarboxylate(in) = L-erythro-7,8-dihydrobiopterin(in) + a dicarboxylate(out). It catalyses the reaction L-sepiapterin(out) + a dicarboxylate(in) = L-sepiapterin(in) + a dicarboxylate(out). Its function is as follows. Functions as an organic anion/dicarboxylate exchanger that couples organic anion uptake indirectly to the sodium gradient. Transports organic anions such as estrone 3-sulfate (E1S) and urate in exchange for dicarboxylates such as glutarate or ketoglutarate (2-oxoglutarate). Plays an important role in the excretion of endogenous and exogenous organic anions, especially from the kidney and the brain. E1S transport is pH- and chloride-dependent and may also involve E1S/cGMP exchange. Responsible for the transport of prostaglandin E2 (PGE2) and prostaglandin F2(alpha) (PGF2(alpha)) in the basolateral side of the renal tubule. Involved in the transport of neuroactive tryptophan metabolites kynurenate and xanthurenate. Functions as a biopterin transporters involved in the uptake and the secretion of coenzymes tetrahydrobiopterin (BH4), dihydrobiopterin (BH2) and sepiapterin to urine, thereby determining baseline levels of blood biopterins. May be involved in the basolateral transport of steviol, a metabolite of the popular sugar substitute stevioside. May participate in the detoxification/ renal excretion of drugs and xenobiotics, such as the histamine H(2)-receptor antagonists fexofenadine and cimetidine, the antibiotic benzylpenicillin (PCG), the anionic herbicide 2,4-dichloro-phenoxyacetate (2,4-D), the diagnostic agent p-aminohippurate (PAH), the antiviral acyclovir (ACV), and the mycotoxin ochratoxin (OTA), by transporting these exogenous organic anions across the cell membrane in exchange for dicarboxylates such as 2-oxoglutarate. Contributes to the renal uptake of potent uremic toxins (indoxyl sulfate (IS), indole acetate (IA), hippurate/N-benzoylglycine (HA) and 3-carboxy-4-methyl-5-propyl-2-furanpropionate (CMPF)), pravastatin, PCG, E1S and dehydroepiandrosterone sulfate (DHEAS), and is partly involved in the renal uptake of temocaprilat (an angiotensin-converting enzyme (ACE) inhibitor). May contribute to the release of cortisol in the adrenals. Involved in one of the detoxification systems on the choroid plexus (CP), removes substrates such as E1S or taurocholate (TC), PCG, 2,4-D and PAH, from the cerebrospinal fluid (CSF) to the blood for eventual excretion in urine and bile. Also contributes to the uptake of several other organic compounds such as the prostanoids prostaglandin E(2) and prostaglandin F(2-alpha), L-carnitine, and the therapeutic drugs allopurinol, 6-mercaptopurine (6-MP) and 5-fluorouracil (5-FU). Mediates the transport of PAH, PCG, and the statins pravastatin and pitavastatin, from the cerebrum into the blood circulation across the blood-brain barrier (BBB). In summary, plays a role in the efflux of drugs and xenobiotics, helping reduce their undesired toxicological effects on the body. This chain is Organic anion transporter 3 (SLC22A8), found in Sus scrofa (Pig).